Reading from the N-terminus, the 410-residue chain is MEPPPAPGPERLFDSHRLPSDGFLLLALLLYAPVGLCLLVLRLFLGLHVFLVSCALPDSVLRRFVVRTMCAVLGLVARQEDSGLRDHRVRVLISNHVTPFDHNIVNLLTTCSTPLLNSPPSFVCWSRGFMEMDRRVELVESLKKFCASTRLPPTPLLLFPEEEATNGREGLLRFSSWPFSIQDVVQPLTLQVQRPLVSVTVSDASWVSELLWSLFVPFTVYQVRWLHPIRRQLGEENEEFALRVQQLVAKELGQIGTRLTPADKAEHMKRQRHPRLRPQSVQSSFPSPPSPSSDVQLTILAQRVKEVLPHVPLNVIQRDLARTGCVDLTITNLLEGAVAFMPEDVTEGSQSLPTASAPKFPSSGLVTPQPTALTFAKSSWARQESLQERKQALYEYARRRFRERQAQEAE.

Met-1 carries the N-acetylmethionine modification. Topologically, residues 1–20 (MEPPPAPGPERLFDSHRLPS) are cytoplasmic. An intramembrane segment occupies 21–41 (DGFLLLALLLYAPVGLCLLVL). The Cytoplasmic portion of the chain corresponds to 42-410 (RLFLGLHVFL…FRERQAQEAE (369 aa)). Residues 259-293 (LTPADKAEHMKRQRHPRLRPQSVQSSFPSPPSPSS) form a disordered region. A Phosphoserine modification is found at Ser-292. The region spanning 296 to 338 (QLTILAQRVKEVLPHVPLNVIQRDLARTGCVDLTITNLLEGAV) is the CUE domain. Positions 348 to 367 (GSQSLPTASAPKFPSSGLVT) are disordered. Position 363 is a phosphoserine (Ser-363). Thr-367 carries the phosphothreonine modification.

This sequence belongs to the AUP1 family. Identified in a complex that contains SEL1L, OS9, FAF2/UBXD8, UBE2J1/UBC6E and AUP1. Interacts with the cytoplasmic tail of ITGA2B, ITGA1, ITGA2, ITGA5, ITGAV and ITGAM. Interacts (via C-terminus) with UBE2G2; the interaction recruits UBE2G2 to lipid droplets. Interacts with ubiquitin ligases AMFR/gp78 and RNF139/TRC8; this promotes interaction of UBE2G2 with AMFR and RNF139. Interacts with apolipoprotein APOB. Post-translationally, monoubiquitinated and diubiquitinated.

The protein resides in the endoplasmic reticulum membrane. It localises to the lipid droplet. Functionally, plays a role in the translocation of terminally misfolded proteins from the endoplasmic reticulum lumen to the cytoplasm and their degradation by the proteasome. Plays a role in lipid droplet formation. Induces lipid droplet clustering. Recruits ubiquitin-conjugating enzyme UBE2G2 to lipid droplets which facilitates its interaction with ubiquitin ligases AMFR/gp78 and RNF139/TRC8, leading to sterol-induced ubiquitination of HMGCR and its subsequent proteasomal degradation. Also required for the degradation of INSIG1, SREBF1 and SREBF2. Plays a role in regulating assembly and secretion of very low density lipoprotein particles and stability of apolipoprotein APOB. The polypeptide is Lipid droplet-regulating VLDL assembly factor AUP1 (Rattus norvegicus (Rat)).